A 96-amino-acid chain; its full sequence is MTTHKAMTRVQLEAMGEVFAVDNLTRMGLRGLHCNWRCRYGECDVIASETAHRTVVSRLRSIAATVMEGSRRSAPEQKVRWLRWLAGLWPANQDEF.

The protein belongs to the UPF0102 family.

The polypeptide is UPF0102 protein ML1607 (Mycobacterium leprae (strain TN)).